Consider the following 300-residue polypeptide: Protease HtpX homolog (300 aa).

A run of 2 helical transmembrane segments spans residues 7 to 24 and 29 to 46; these read GILMAVMTALFLGVGALI and GAIIALVIAAGMNLFTFW. Histidine 130 is a Zn(2+) binding site. Glutamate 131 is a catalytic residue. Histidine 134 contributes to the Zn(2+) binding site. A run of 2 helical transmembrane segments spans residues 145-165 and 174-194; these read VTATFAGAISMLANFAFFFGG and PMGLVGTLALMFLAPLAAGLV. Glutamate 203 contributes to the Zn(2+) binding site.

The protein belongs to the peptidase M48B family. Zn(2+) is required as a cofactor.

It localises to the cell inner membrane. This chain is Protease HtpX homolog, found in Cereibacter sphaeroides (strain ATCC 17029 / ATH 2.4.9) (Rhodobacter sphaeroides).